The primary structure comprises 391 residues: ATP phosphoribosyltransferase regulatory subunit (391 aa).

This sequence belongs to the class-II aminoacyl-tRNA synthetase family. HisZ subfamily. As to quaternary structure, heteromultimer composed of HisG and HisZ subunits.

The protein localises to the cytoplasm. It participates in amino-acid biosynthesis; L-histidine biosynthesis; L-histidine from 5-phospho-alpha-D-ribose 1-diphosphate: step 1/9. In terms of biological role, required for the first step of histidine biosynthesis. May allow the feedback regulation of ATP phosphoribosyltransferase activity by histidine. The chain is ATP phosphoribosyltransferase regulatory subunit from Prochlorococcus marinus (strain SARG / CCMP1375 / SS120).